A 612-amino-acid polypeptide reads, in one-letter code: Apoptosis-inducing factor 1, mitochondrial (612 aa).

2 consecutive short sequence motifs (mitochondrial localization signal) follow at residues 1-30 (MFRC…PKQR) and 62-88 (KMDN…KTIK). The N-terminal 53 residues, 1 to 53 (MFRCGGLAGAFKQKLVPLVRSVCVQRPKQRNRLPGNLFQQWRVPLELQMARQM), are a transit peptide targeting the mitochondrion. 2 consecutive propeptides (removed in mature form) follow at residues 54-100 (ASSG…RIMG) and 55-101 (SSGP…IMGL). Lys-108 is subject to N6-succinyllysine. A Phosphoserine modification is found at Ser-115. An FAD-dependent oxidoreductase region spans residues 133 to 482 (FLLIGGGTAA…KPYWHQSMFW (350 aa)). Residues 137–141 (GGGTA), 163–164 (ED), Arg-171, and Lys-176 contribute to the FAD site. Trp-195 provides a ligand contact to NAD(+). Val-232 is a binding site for FAD. Residue Lys-254 forms a Glycyl lysine isopeptide (Lys-Gly) (interchain with G-Cter in ubiquitin) linkage. Ser-267 bears the Phosphoserine mark. Residue Arg-284 participates in FAD binding. NAD(+)-binding positions include 307 to 310 (GGFL), Glu-335, and Lys-341. Ser-370 is subject to Phosphoserine. Lys-387 carries the post-translational modification N6-acetyllysine. Residue Gly-398 coordinates NAD(+). Asp-437 contacts FAD. Residues 445–450 (KLGRRR) carry the Nuclear localization signal motif. NAD(+)-binding positions include 452–453 (EH), Trp-482, and Glu-492. FAD-binding positions include 453–454 (HH) and Trp-482. Positions 512–528 (AQDNPKSATEQSGTGIR) are enriched in polar residues. The interval 512–551 (AQDNPKSATEQSGTGIRSESETESEASEITIPPSDPAVPQ) is disordered. Phosphothreonine is present on Thr-520. Residues Ser-523 and Ser-529 each carry the phosphoserine modification. Asn-582 is a binding site for NAD(+). N6-acetyllysine is present on Lys-592.

This sequence belongs to the FAD-dependent oxidoreductase family. As to quaternary structure, monomer (oxidized form). Homodimer (reduced form). Upon reduction with NADH, undergoes dimerization and forms tight, long-lived FADH2-NAD charge transfer complexes (CTC) resistant to oxidation. Also dimerizes with isoform 3 preventing its release from mitochondria. Interacts with XIAP/BIRC4. Interacts (via N-terminus) with EIF3G (via C-terminus). Interacts with PRELID1. Interacts with CHCHD4; the interaction increases in presence of NADH. Interacts with processed form of PARP1 (Poly [ADP-ribose] polymerase 1, processed C-terminus); interaction is mediated with poly-ADP-ribose chains attached to PARP1, promoting translocation into the nucleus. FAD is required as a cofactor. In terms of processing, under normal conditions, a 54-residue N-terminal segment is first proteolytically removed during or just after translocation into the mitochondrial intermembrane space (IMS) by the mitochondrial processing peptidase (MPP) to form the inner-membrane-anchored mature form (AIFmit). During apoptosis, it is further proteolytically processed at amino-acid position 101 leading to the generation of the mature form, which is confined to the mitochondrial IMS in a soluble form (AIFsol). AIFsol is released to the cytoplasm in response to specific death signals, and translocated to the nucleus, where it induces nuclear apoptosis in a caspase-independent manner. Post-translationally, ubiquitination by XIAP/BIRC4 does not lead to proteasomal degradation. Ubiquitination at Lys-254 by XIAP/BIRC4 blocks its ability to bind DNA and induce chromatin degradation, thereby inhibiting its ability to induce cell death.

It is found in the mitochondrion intermembrane space. The protein localises to the mitochondrion inner membrane. The protein resides in the cytoplasm. Its subcellular location is the nucleus. It localises to the perinuclear region. It catalyses the reaction A + NADH + H(+) = AH2 + NAD(+). Functions both as NADH oxidoreductase and as regulator of apoptosis. In response to apoptotic stimuli, it is released from the mitochondrion intermembrane space into the cytosol and to the nucleus, where it functions as a proapoptotic factor in a caspase-independent pathway. Release into the cytoplasm is mediated upon binding to poly-ADP-ribose chains. The soluble form (AIFsol) found in the nucleus induces 'parthanatos' i.e. caspase-independent fragmentation of chromosomal DNA. Binds to DNA in a sequence-independent manner. Interacts with EIF3G, and thereby inhibits the EIF3 machinery and protein synthesis, and activates caspase-7 to amplify apoptosis. Plays a critical role in caspase-independent, pyknotic cell death in hydrogen peroxide-exposed cells. In contrast, participates in normal mitochondrial metabolism. Plays an important role in the regulation of respiratory chain biogenesis by interacting with CHCHD4 and controlling CHCHD4 mitochondrial import. This chain is Apoptosis-inducing factor 1, mitochondrial (Aifm1), found in Rattus norvegicus (Rat).